We begin with the raw amino-acid sequence, 271 residues long: Protein ABHD14A (271 aa).

A helical; Signal-anchor for type II membrane protein membrane pass occupies residues 35-55 (VALLGLSLLLMLLLYVGLPGP). The N-linked (GlcNAc...) asparagine glycan is linked to asparagine 67. Serine 171 (charge relay system) is an active-site residue. An N-linked (GlcNAc...) asparagine glycan is attached at asparagine 201. Catalysis depends on charge relay system residues aspartate 222 and histidine 249.

This sequence belongs to the AB hydrolase superfamily. ABHD14 family.

The protein resides in the cytoplasm. It localises to the membrane. In terms of biological role, possible role in granule neuron development. The sequence is that of Protein ABHD14A from Homo sapiens (Human).